The following is a 367-amino-acid chain: tRNA-specific 2-thiouridylase MnmA (367 aa).

Residues 9 to 16 and phenylalanine 35 each bind ATP; that span reads LMSGGVDS. Cysteine 107 (nucleophile) is an active-site residue. A disulfide bond links cysteine 107 and cysteine 205. Residue glycine 131 coordinates ATP. Residues 155–157 are interaction with tRNA; the sequence is KDQ. Cysteine 205 serves as the catalytic Cysteine persulfide intermediate.

This sequence belongs to the MnmA/TRMU family.

Its subcellular location is the cytoplasm. It carries out the reaction S-sulfanyl-L-cysteinyl-[protein] + uridine(34) in tRNA + AH2 + ATP = 2-thiouridine(34) in tRNA + L-cysteinyl-[protein] + A + AMP + diphosphate + H(+). Its function is as follows. Catalyzes the 2-thiolation of uridine at the wobble position (U34) of tRNA, leading to the formation of s(2)U34. In Petrotoga mobilis (strain DSM 10674 / SJ95), this protein is tRNA-specific 2-thiouridylase MnmA.